We begin with the raw amino-acid sequence, 283 residues long: Zinc-finger homeodomain protein 8 (283 aa).

The ZF-HD dimerization-type; degenerate zinc finger occupies 23-68 (YKECMRNHAAAMGGQAFDGCGEYMPASPDSLKCAACGCHRSFHRRA). Disordered stretches follow at residues 131–171 (AGRA…TKFT) and 244–283 (GLGT…PISV). Residues 148–161 (GSAGGSGSGGGGIF) show a composition bias toward gly residues. The segment at residues 163–226 (RKRFRTKFTP…NHKNQLASSP (64 aa)) is a DNA-binding region (homeobox). Over residues 244 to 256 (GLGTGLGTGISGD) the composition is skewed to gly residues. The span at 257 to 266 (GDGDDDDTDD) shows a compositional bias: acidic residues. Residues 269 to 283 (PRAAVSSPSPSPISV) show a composition bias toward low complexity.

As to quaternary structure, homo- and heterodimer with other ZFHD proteins.

It is found in the nucleus. In terms of biological role, putative transcription factor. This is Zinc-finger homeodomain protein 8 (ZHD8) from Oryza sativa subsp. japonica (Rice).